Consider the following 590-residue polypeptide: ATP-dependent zinc metalloprotease FtsH 1 (590 aa).

At 1 to 8 (MLKLTKKQ) the chain is on the cytoplasmic side. A helical transmembrane segment spans residues 9–29 (LIIVLGIAIVVVSAIGYAVYT). Topologically, residues 30-103 (QYFNEDKLEI…QVRETTDQYS (74 aa)) are extracellular. Residues 104–124 (VVQVITFVVLIGGFIGVAIFL) traverse the membrane as a helical segment. The Cytoplasmic portion of the chain corresponds to 125 to 590 (SKKNATQTSK…NEIFSGFQSM (466 aa)). 195-202 (GSPGTGKT) provides a ligand contact to ATP. H418 serves as a coordination point for Zn(2+). E419 is a catalytic residue. 2 residues coordinate Zn(2+): H422 and D496.

In the central section; belongs to the AAA ATPase family. The protein in the C-terminal section; belongs to the peptidase M41 family. In terms of assembly, homohexamer. Requires Zn(2+) as cofactor.

It localises to the cell membrane. In terms of biological role, acts as a processive, ATP-dependent zinc metallopeptidase for both cytoplasmic and membrane proteins. Plays a role in the quality control of integral membrane proteins. In Alkaliphilus metalliredigens (strain QYMF), this protein is ATP-dependent zinc metalloprotease FtsH 1.